The chain runs to 406 residues: Ribonuclease D (406 aa).

The 168-residue stretch at 26–193 (LITQTTDLEI…VYLLLKKQLE (168 aa)) folds into the 3'-5' exonuclease domain. One can recognise an HRDC domain in the interval 231 to 312 (KPRELAVLQK…HEGLEVDLAT (82 aa)).

Belongs to the RNase D family. Requires a divalent metal cation as cofactor.

It is found in the cytoplasm. The enzyme catalyses Exonucleolytic cleavage that removes extra residues from the 3'-terminus of tRNA to produce 5'-mononucleotides.. Exonuclease involved in the 3' processing of various precursor tRNAs. Initiates hydrolysis at the 3'-terminus of an RNA molecule and releases 5'-mononucleotides. This is Ribonuclease D from Bartonella henselae (strain ATCC 49882 / DSM 28221 / CCUG 30454 / Houston 1) (Rochalimaea henselae).